An 84-amino-acid polypeptide reads, in one-letter code: Dolichol phosphate-mannose biosynthesis regulatory protein (84 aa).

Helical transmembrane passes span 11-31 (FGLV…VILL) and 49-69 (YAVL…GLFI).

Belongs to the DPM2 family. In terms of assembly, component of the dolichol-phosphate mannose (DPM) synthase complex composed of DPM1, DPM2 and DPM3; in the complex interacts directly with DPM3. Component of the glycosylphosphatidylinositol-N-acetylglucosaminyltransferase (GPI-GnT) complex composed at least by PIGA, PIGC, PIGH, PIGP, PIGQ, PIGY and DPM2. Interacts with PIGA, PIGC and PIGQ.

It localises to the endoplasmic reticulum membrane. Its pathway is protein modification; protein glycosylation. Its function is as follows. Regulates the biosynthesis of dolichol phosphate-mannose. Regulatory subunit of the dolichol-phosphate mannose (DPM) synthase complex; essential for the ER localization and stable expression of DPM1. Part of the glycosylphosphatidylinositol-N-acetylglucosaminyltransferase (GPI-GnT) complex that catalyzes the transfer of N-acetylglucosamine from UDP-N-acetylglucosamine to phosphatidylinositol and participates in the first step of GPI biosynthesis. May act by regulating the GPI-GNT complex. This is Dolichol phosphate-mannose biosynthesis regulatory protein from Mus musculus (Mouse).